Here is a 259-residue protein sequence, read N- to C-terminus: Proteasome subunit alpha (259 aa).

This sequence belongs to the peptidase T1A family. The 20S proteasome core is composed of 14 alpha and 14 beta subunits that assemble into four stacked heptameric rings, resulting in a barrel-shaped structure. The two inner rings, each composed of seven catalytic beta subunits, are sandwiched by two outer rings, each composed of seven alpha subunits. The catalytic chamber with the active sites is on the inside of the barrel. Has a gated structure, the ends of the cylinder being occluded by the N-termini of the alpha-subunits. Is capped at one or both ends by the proteasome regulatory ATPase, PAN.

The protein localises to the cytoplasm. The formation of the proteasomal ATPase PAN-20S proteasome complex, via the docking of the C-termini of PAN into the intersubunit pockets in the alpha-rings, triggers opening of the gate for substrate entry. Interconversion between the open-gate and close-gate conformations leads to a dynamic regulation of the 20S proteasome proteolysis activity. In terms of biological role, component of the proteasome core, a large protease complex with broad specificity involved in protein degradation. This Methanococcus maripaludis (strain C5 / ATCC BAA-1333) protein is Proteasome subunit alpha.